The following is a 79-amino-acid chain: MKTLLLTLVVVTIVCLDLGNSLKCYDKLKKEVTCPEGMKFCHKDVLPATHGNSVLVMGCTYSCGLGPRNMCCSTDLCNK.

Residues 1 to 21 form the signal peptide; the sequence is MKTLLLTLVVVTIVCLDLGNS. 4 cysteine pairs are disulfide-bonded: Cys-24–Cys-41, Cys-34–Cys-59, Cys-63–Cys-71, and Cys-72–Cys-77.

The protein belongs to the three-finger toxin family. Short-chain subfamily. As to expression, expressed by the venom gland.

It is found in the secreted. Snake venom neurotoxin that blocks neuromuscular transmission, presenting a postsynaptic action through the nicotinic acetylcholine receptor (nAChR). Has no cytotoxic activity. This Micrurus mipartitus (Red-tailed coral snake) protein is Mipartoxin-3.